A 177-amino-acid polypeptide reads, in one-letter code: PLAC8-like protein 1 (177 aa).

Belongs to the cornifelin family.

This is PLAC8-like protein 1 (Plac8l1) from Mus musculus (Mouse).